A 434-amino-acid polypeptide reads, in one-letter code: Nicotinate phosphoribosyltransferase (434 aa).

Residue His-242 is modified to Phosphohistidine; by autocatalysis.

The protein belongs to the NAPRTase family. Post-translationally, transiently phosphorylated on a His residue during the reaction cycle. Phosphorylation strongly increases the affinity for substrates and increases the rate of nicotinate D-ribonucleotide production. Dephosphorylation regenerates the low-affinity form of the enzyme, leading to product release.

It carries out the reaction nicotinate + 5-phospho-alpha-D-ribose 1-diphosphate + ATP + H2O = nicotinate beta-D-ribonucleotide + ADP + phosphate + diphosphate. It participates in cofactor biosynthesis; NAD(+) biosynthesis; nicotinate D-ribonucleotide from nicotinate: step 1/1. Catalyzes the synthesis of beta-nicotinate D-ribonucleotide from nicotinate and 5-phospho-D-ribose 1-phosphate at the expense of ATP. The sequence is that of Nicotinate phosphoribosyltransferase from Chelativorans sp. (strain BNC1).